The following is a 427-amino-acid chain: Enolase (427 aa).

Gln163 serves as a coordination point for (2R)-2-phosphoglycerate. The active-site Proton donor is Glu205. Asp242, Glu285, and Asp312 together coordinate Mg(2+). (2R)-2-phosphoglycerate is bound by residues Lys337, Arg366, Ser367, and Lys388. Residue Lys337 is the Proton acceptor of the active site.

It belongs to the enolase family. The cofactor is Mg(2+).

The protein resides in the cytoplasm. Its subcellular location is the secreted. It localises to the cell surface. The catalysed reaction is (2R)-2-phosphoglycerate = phosphoenolpyruvate + H2O. It participates in carbohydrate degradation; glycolysis; pyruvate from D-glyceraldehyde 3-phosphate: step 4/5. Its function is as follows. Catalyzes the reversible conversion of 2-phosphoglycerate (2-PG) into phosphoenolpyruvate (PEP). It is essential for the degradation of carbohydrates via glycolysis. The sequence is that of Enolase from Albidiferax ferrireducens (strain ATCC BAA-621 / DSM 15236 / T118) (Rhodoferax ferrireducens).